Here is a 1147-residue protein sequence, read N- to C-terminus: SR-related and CTD-associated factor 4 (1147 aa).

The 139-residue stretch at 1-139 folds into the CID domain; sequence MDAVNAFNQE…PLLDMAAGTS (139 aa). Residue K49 is modified to N6-acetyllysine. Disordered stretches follow at residues 145-179, 235-254, 269-331, and 424-502; these read AENV…AVPQ, KTTP…PEQK, DEPE…QQPA, and VKRH…KPET. Position 154 is a phosphoserine (S154). 2 stretches are compositionally biased toward low complexity: residues 283–292 and 299–310; these read TAVTTTAPAA and TATVPAAAAPAA. A compositionally biased stretch (basic and acidic residues) spans 424-433; it reads VKRHMSDNRK. Over residues 434 to 475 the composition is skewed to basic residues; that stretch reads SRSRSASRSPKRRRSRSGSRSRRSRHRRSRSRSRDRRRHSPR. A compositionally biased stretch (basic and acidic residues) spans 477–492; sequence RSQERRDREKERERRQ. An RRM domain is found at 508-582; that stretch reads TTLWVGQLDK…KSIKIAWALN (75 aa). Disordered stretches follow at residues 629 to 661 and 879 to 1147; these read DWKG…IPKP and RPMP…EAPR. A Phosphoserine modification is found at S656. Residues 879–913 show a composition bias toward pro residues; the sequence is RPMPPHMMHRGPPPGPGGFAMPPPHGMKGPFPPHG. Low complexity predominate over residues 941–965; that stretch reads QQPPQQPQQQPQPQAPQQPQQQQQQ. Positions 966 to 977 are enriched in pro residues; that stretch reads QPPPSQQPPPTQ. S1004 is modified (phosphoserine). The segment covering 1009 to 1085 has biased composition (basic and acidic residues); it reads VENDRERYGN…RGKEKPEVTD (77 aa).

In terms of assembly, interacts with POLR2A; via C-terminal heptapeptide repeat domain (CTD) phosphorylated at 'Ser-2' and 'Ser-5'.

It is found in the nucleus. In terms of biological role, anti-terminator protein required to prevent early mRNA termination during transcription. Together with SCAF8, acts by suppressing the use of early, alternative poly(A) sites, thereby preventing the accumulation of non-functional truncated proteins. Mechanistically, associates with the phosphorylated C-terminal heptapeptide repeat domain (CTD) of the largest RNA polymerase II subunit (POLR2A), and subsequently binds nascent RNA upstream of early polyadenylation sites to prevent premature mRNA transcript cleavage and polyadenylation. Independently of SCAF8, also acts as a suppressor of transcriptional readthrough. The protein is SR-related and CTD-associated factor 4 of Homo sapiens (Human).